Reading from the N-terminus, the 109-residue chain is Ubiquitin-related modifier 1 homolog (109 aa).

Glycine 109 is modified (1-thioglycine). Glycine 109 is covalently cross-linked (Glycyl lysine isopeptide (Gly-Lys) (interchain with K-? in acceptor proteins)).

The protein belongs to the URM1 family. C-terminal thiocarboxylation occurs in 2 steps, it is first acyl-adenylated (-COAMP) via the hesA/moeB/thiF part of the MOCS3 homolog, then thiocarboxylated (-COSH) via the rhodanese domain of the MOCS3 homolog.

It is found in the cytoplasm. The protein operates within tRNA modification; 5-methoxycarbonylmethyl-2-thiouridine-tRNA biosynthesis. Functionally, acts as a sulfur carrier required for 2-thiolation of mcm(5)S(2)U at tRNA wobble positions of cytosolic tRNA(Lys), tRNA(Glu) and tRNA(Gln). Serves as sulfur donor in tRNA 2-thiolation reaction by being thiocarboxylated (-COSH) at its C-terminus by MOCS3. The sulfur is then transferred to tRNA to form 2-thiolation of mcm(5)S(2)U. Also acts as a ubiquitin-like protein (UBL) that is covalently conjugated via an isopeptide bond to lysine residues of target proteins. The thiocarboxylated form serves as substrate for conjugation and oxidative stress specifically induces the formation of UBL-protein conjugates. In Bombyx mori (Silk moth), this protein is Ubiquitin-related modifier 1 homolog.